The sequence spans 309 residues: Tumor necrosis factor ligand superfamily member 13B (309 aa).

Residues 1 to 47 (MDESAKTLPPPCLCFCSEKGEDMKVGYDPITPQKEEGAWFGICRDGR) are Cytoplasmic-facing. A helical; Signal-anchor for type II membrane protein membrane pass occupies residues 48-68 (LLAATLLLALLSSSFTAMSLY). The Extracellular portion of the chain corresponds to 69–309 (QLAALQADLM…DTFFGALKLL (241 aa)). The tract at residues 110 to 140 (PAAPRPHNSSRGHRNRRAFQGPEETEQDVDL) is disordered. Asparagine 117 and asparagine 266 each carry an N-linked (GlcNAc...) asparagine glycan. Basic residues predominate over residues 117–126 (NSSRGHRNRR). One can recognise a THD domain in the interval 169 to 308 (DCLQLIADSD…DDTFFGALKL (140 aa)). Cysteine 256 and cysteine 269 form a disulfide bridge.

The protein belongs to the tumor necrosis factor family. As to quaternary structure, homotrimer. Isoform 2 heteromultimerizes with isoform 1, probably limiting the amount of functional isoform 1 on the cell surface. Post-translationally, the soluble form derives from the membrane form by proteolytic processing. In terms of processing, isoform 2 is not efficiently shed from the membrane unlike isoform 1. In terms of tissue distribution, isoform 2 is expressed in many myeloid cell lines.

It localises to the cell membrane. The protein localises to the secreted. In terms of biological role, cytokine that binds to TNFRSF13B/TACI and TNFRSF17/BCMA. TNFSF13/APRIL binds to the same 2 receptors. Together, they form a 2 ligands -2 receptors pathway involved in the stimulation of B- and T-cell function and the regulation of humoral immunity. A third B-cell specific BAFF-receptor (BAFFR/BR3) promotes the survival of mature B-cells and the B-cell response. Its function is as follows. Isoform 2 seems to inhibit isoform 1 secretion and bioactivity. This chain is Tumor necrosis factor ligand superfamily member 13B (Tnfsf13b), found in Mus musculus (Mouse).